The following is a 1171-amino-acid chain: WD repeat-containing protein on Y chromosome (1171 aa).

8 WD repeats span residues 157–201, 331–370, 374–413, 464–503, 516–555, 603–643, 748–787, and 831–870; these read EIPE…LRSA, RIPL…EPSA, GHNG…LLQT, THAA…RKII, IIDI…VVRN, FHTD…RRYN, KVGD…IPQA, and GHLK…LGTL. The segment at 1076 to 1171 is disordered; sequence RTSFTLSDYT…TNTMKSSNSH (96 aa). 2 stretches are compositionally biased toward polar residues: residues 1094 to 1106 and 1161 to 1171; these read SSRN…SSGS and KTNTMKSSNSH.

This Drosophila grimshawi (Hawaiian fruit fly) protein is WD repeat-containing protein on Y chromosome.